The following is a 263-amino-acid chain: Purine nucleoside phosphorylase SAS1121 (263 aa).

Zn(2+) is bound by residues histidine 79, cysteine 124, and histidine 141.

It belongs to the purine nucleoside phosphorylase YfiH/LACC1 family. Homodimer. Cu(2+) is required as a cofactor. Requires Zn(2+) as cofactor.

It catalyses the reaction adenosine + phosphate = alpha-D-ribose 1-phosphate + adenine. It carries out the reaction S-methyl-5'-thioadenosine + phosphate = 5-(methylsulfanyl)-alpha-D-ribose 1-phosphate + adenine. The enzyme catalyses inosine + phosphate = alpha-D-ribose 1-phosphate + hypoxanthine. The catalysed reaction is adenosine + H2O + H(+) = inosine + NH4(+). Functionally, purine nucleoside enzyme that catalyzes the phosphorolysis of adenosine and inosine nucleosides, yielding D-ribose 1-phosphate and the respective free bases, adenine and hypoxanthine. Also catalyzes the phosphorolysis of S-methyl-5'-thioadenosine into adenine and S-methyl-5-thio-alpha-D-ribose 1-phosphate. Also has adenosine deaminase activity. This chain is Purine nucleoside phosphorylase SAS1121, found in Staphylococcus aureus (strain MSSA476).